The sequence spans 86 residues: Large ribosomal subunit protein bL27 (86 aa).

The interval 1 to 24 is disordered; that stretch reads MAHKKGTGSTRNGRDSNSKRLGVK.

Belongs to the bacterial ribosomal protein bL27 family.

This is Large ribosomal subunit protein bL27 from Prochlorococcus marinus (strain MIT 9312).